A 313-amino-acid chain; its full sequence is MNNENNFSVFSGTNSRYLAEKICNSLGCPLGRMNIEHFADGEFAVSYEESIRGRDVFLVQSTFPSSDNLMELLLMIDAAKRASAHYITAVIPYFGWARQDRKDKPRVSIGAKLIADLLSKAGITRLITMDLHADQIQGFFDVPVDHLYGSTVFMEYIRKNMPLENLVVATPDVGGTKRANSYAKHLGVPMVICHKSRLKANEIAEMRIIGDVQDKDVLLVDDIVDTAGTITKAADLMKENGARSVCAIASHAVMSDPASMRVDQSTLKEMIFTDSIPYPHKCEKVKILSVADLFAEAIKRVCSHESITTLYYF.

Residues Asp40 to Glu42 and Arg98 to Gln99 each bind ATP. Residues His132 and Asp172 each coordinate Mg(2+). Lys195 is a catalytic residue. Residues Arg197, Asp221, and Asp225–Thr229 contribute to the D-ribose 5-phosphate site.

It belongs to the ribose-phosphate pyrophosphokinase family. Class I subfamily. Homohexamer. Mg(2+) is required as a cofactor.

Its subcellular location is the cytoplasm. It catalyses the reaction D-ribose 5-phosphate + ATP = 5-phospho-alpha-D-ribose 1-diphosphate + AMP + H(+). Its pathway is metabolic intermediate biosynthesis; 5-phospho-alpha-D-ribose 1-diphosphate biosynthesis; 5-phospho-alpha-D-ribose 1-diphosphate from D-ribose 5-phosphate (route I): step 1/1. Its function is as follows. Involved in the biosynthesis of the central metabolite phospho-alpha-D-ribosyl-1-pyrophosphate (PRPP) via the transfer of pyrophosphoryl group from ATP to 1-hydroxyl of ribose-5-phosphate (Rib-5-P). The sequence is that of Ribose-phosphate pyrophosphokinase from Porphyromonas gingivalis (strain ATCC BAA-308 / W83).